A 741-amino-acid chain; its full sequence is Zinc transporter ZIP6 (741 aa).

A signal peptide spans 1 to 20; the sequence is MATNLSVIMILTFALWVTNP. Residues 21 to 311 are Extracellular-facing; the sequence is LHELQSTAAF…PKTYSLQIAW (291 aa). Asn-68 carries an N-linked (GlcNAc...) asparagine glycan. Residues 95–111 are compositionally biased toward basic and acidic residues; the sequence is HDHERHSDHERHSDHER. Disordered regions lie at residues 95 to 172 and 189 to 213; these read HDHE…EVTS and ETPKPGRRTKDINPSTPPSITEKSR. The span at 135–147 shows a compositional bias: polar residues; it reads DNSGKNPNTSQGK. A glycan (N-linked (GlcNAc...) asparagine) is linked at Asn-142. The span at 150–162 shows a compositional bias: basic and acidic residues; it reads RPAEHVNGRRNGK. Residues 163-172 show a composition bias toward low complexity; sequence ESASSSEVTS. Residues 200–209 are compositionally biased toward polar residues; that stretch reads INPSTPPSIT. 3 N-linked (GlcNAc...) asparagine glycosylation sites follow: Asn-226, Asn-251, and Asn-268. Residues 312–332 traverse the membrane as a helical segment; that stretch reads LGGFIAISIISFLSLLGVILV. The Cytoplasmic portion of the chain corresponds to 333–341; that stretch reads PLMNRVFFK. Residues 342 to 362 traverse the membrane as a helical segment; the sequence is FLLSFLVALAVGTLSGDALLH. Over 363 to 409 the chain is Extracellular; that stretch reads LLPHSHASHHHSHSHEEPAMEMKRGPLFSHLSAQNLEESSYFDSTWK. Residues 410 to 430 traverse the membrane as a helical segment; that stretch reads GLTALGGLYFMFLVEHVLTLI. Residues 431–643 are Cytoplasmic-facing; the sequence is KQFKDKKKKN…LKAGMTVKQA (213 aa). Residues 434-494 are disordered; that stretch reads KDKKKKNQKK…QEPSPFDSQQ (61 aa). Residues 450–475 are a coiled coil; it reads VESKKQLSKYESQLSTNEEKVDTGER. Ser-457 and Ser-464 each carry phosphoserine. The span at 466-477 shows a compositional bias: basic and acidic residues; it reads NEEKVDTGERPE. Residues 481-494 are compositionally biased toward polar residues; that stretch reads QADSQEPSPFDSQQ. The helical transmembrane segment at 644-664 threads the bilayer; it reads VLYNALSAMLAYLGMATGIFI. The Extracellular segment spans residues 665–672; it reads GHYAENVS. N-linked (GlcNAc...) asparagine glycosylation occurs at Asn-670. The chain crosses the membrane as a helical span at residues 673 to 693; it reads MWIFALTAGLFMYVALVDMVP. Topologically, residues 694-710 are cytoplasmic; sequence EMLHNDASDHGCSRWGY. Residues 711 to 731 traverse the membrane as a helical segment; that stretch reads FFLQNAGILLGFGIMLLISIF. Over 732-741 the chain is Extracellular; sequence EHKIVFRINF.

Belongs to the ZIP transporter (TC 2.A.5) family. As to quaternary structure, interacts with SLC39A10; which triggers cells to undergo EMT and mitosis. Found in a complex with SLC39A6, SLC39A10 and with the 'Ser-727' phosphorylated form of STAT3 throughout mitosis. Found in a complex with SLC39A6, SLC39A10 and with NCAM1; this complex controls NCAM1 phosphorylation and integration into focal adhesion complexes during epithelial-to-mesenchymal transition (EMT). Found in a complex with SLC39A6, SLC39A10 and with GSK3B that controls NCAM1 phosphorylation. In terms of processing, cleaved on the N-terminus before locating to the plasma membrane. N-glycosylated. Post-translationally, phosphorylated by ZAP70 in response to TCR stimulation leading to its activation. Expressed in the endothelial cells of the brain capillaries.

The protein resides in the cell membrane. It localises to the cell projection. Its subcellular location is the lamellipodium membrane. The protein localises to the membrane raft. It is found in the apical cell membrane. The catalysed reaction is Zn(2+)(in) = Zn(2+)(out). Zinc-influx transporter which plays a role in zinc homeostasis and in the induction of epithelial-to-mesenchymal transition (EMT). When associated with SLC39A10, the heterodimer formed by SLC39A10 and SLC39A6 mediates cellular zinc uptake to trigger cells to undergo epithelial- to-mesenchymal transition (EMT). The SLC39A10-SLC39A6 heterodimer also controls NCAM1 phosphorylation and its integration into focal adhesion complexes during EMT. Zinc influx inactivates GSK3B, enabling unphosphorylated SNAI1 in the nucleus to down-regulate adherence genes such as CDH1, causing loss of cell adherence. In addition, the SLC39A10-SLC39A6 heterodimer plays an essentiel role in initiating mitosis by importing zinc into cells to initiate a pathway resulting in the onset of mitosis. Participates in the T-cell receptor signaling regulation by mediating cellular zinc uptake into activated lymphocytes. Regulates the zinc influx necessary for proper meiotic progression to metaphase II (MII) that allows the oocyte-to-egg transition. In Rattus norvegicus (Rat), this protein is Zinc transporter ZIP6.